A 400-amino-acid chain; its full sequence is Formate-dependent phosphoribosylglycinamide formyltransferase (400 aa).

Residues 22-23 (EL) and glutamate 82 contribute to the N(1)-(5-phospho-beta-D-ribosyl)glycinamide site. Residues arginine 115, lysine 157, 162-167 (SSGKGQ), 197-200 (EGFV), and glutamate 205 each bind ATP. One can recognise an ATP-grasp domain in the interval 120-315 (RLAAETLGVP…EFELHARAIL (196 aa)). Mg(2+) is bound by residues glutamate 274 and glutamate 286. Residues aspartate 293, lysine 362, and 369–370 (RR) contribute to the N(1)-(5-phospho-beta-D-ribosyl)glycinamide site.

The protein belongs to the PurK/PurT family. Homodimer.

It catalyses the reaction N(1)-(5-phospho-beta-D-ribosyl)glycinamide + formate + ATP = N(2)-formyl-N(1)-(5-phospho-beta-D-ribosyl)glycinamide + ADP + phosphate + H(+). It participates in purine metabolism; IMP biosynthesis via de novo pathway; N(2)-formyl-N(1)-(5-phospho-D-ribosyl)glycinamide from N(1)-(5-phospho-D-ribosyl)glycinamide (formate route): step 1/1. In terms of biological role, involved in the de novo purine biosynthesis. Catalyzes the transfer of formate to 5-phospho-ribosyl-glycinamide (GAR), producing 5-phospho-ribosyl-N-formylglycinamide (FGAR). Formate is provided by PurU via hydrolysis of 10-formyl-tetrahydrofolate. This Mycolicibacterium smegmatis (strain ATCC 700084 / mc(2)155) (Mycobacterium smegmatis) protein is Formate-dependent phosphoribosylglycinamide formyltransferase.